The primary structure comprises 391 residues: Processive diacylglycerol beta-glucosyltransferase (391 aa).

The protein belongs to the glycosyltransferase 28 family. UgtP subfamily.

The protein localises to the cell membrane. The enzyme catalyses a 1,2-diacyl-3-O-(beta-D-glucopyranosyl)-sn-glycerol + UDP-alpha-D-glucose = a 1,2-diacyl-3-O-(beta-D-Glc-(1-&gt;6)-beta-D-Glc)-sn-glycerol + UDP + H(+). It catalyses the reaction a 1,2-diacyl-sn-glycerol + UDP-alpha-D-glucose = a 1,2-diacyl-3-O-(beta-D-glucopyranosyl)-sn-glycerol + UDP + H(+). The protein operates within glycolipid metabolism; diglucosyl-diacylglycerol biosynthesis. Functionally, processive glucosyltransferase involved in the biosynthesis of both the bilayer- and non-bilayer-forming membrane glucolipids. Is able to successively transfer two glucosyl residues to diacylglycerol (DAG), thereby catalyzing the formation of beta-monoglucosyl-DAG (3-O-(beta-D-glucopyranosyl)-1,2-diacyl-sn-glycerol) and beta-diglucosyl-DAG (3-O-(beta-D-glucopyranosyl-beta-(1-&gt;6)-D-glucopyranosyl)-1,2-diacyl-sn-glycerol). Beta-diglucosyl-DAG is the predominant glycolipid found in Bacillales and is also used as a membrane anchor for lipoteichoic acid (LTA). The protein is Processive diacylglycerol beta-glucosyltransferase of Staphylococcus carnosus (strain TM300).